A 1283-amino-acid polypeptide reads, in one-letter code: Bifunctional dioxygenase (DOX)-epoxy alcohol synthase (EAS) (1283 aa).

The interval 1-64 (MAEHKNGVAT…LPKEMGDGSY (64 aa)) is disordered. Residues 130 to 476 (TNSFISQLWN…DGKFNDDELV (347 aa)) are fatty acid alpha-dioxygenase. Heme b is bound at residue histidine 227. Tyrosine 405 is an active-site residue. Histidine 408 lines the heme b pocket. An epoxy alcohol synthase region spans residues 684-1108 (INIIGYNAAK…WDDGCGTDLF (425 aa)). Cysteine 1035 contacts heme.

The protein in the N-terminal section; belongs to the peroxidase family. This sequence in the C-terminal section; belongs to the cytochrome P450 family. In terms of assembly, homotetramer. Requires heme b as cofactor. It depends on heme as a cofactor.

The enzyme catalyses (9Z,12Z)-octadecadienoate + O2 = (8E,10R,12Z)-10-hydroperoxyoctadeca-8,12-dienoate. It catalyses the reaction (8E,10R,12Z)-10-hydroperoxyoctadeca-8,12-dienoate = (12S,13R)-epoxy-(10R)-hydroxy-(8E)-octadecenoate. It carries out the reaction (9Z)-octadecenoate + O2 = (8R)-hydroperoxy-(9Z)-octadecenoate. Its function is as follows. Bifunctional dioxygenase (DOX)-epoxy alcohol synthase (EAS) that converts linoleic acid (18:2n-6) sequentially to 10(R)-hydroperoxy-8(E),12(Z)-octadecadienoic acid (10R-HPODE) and 10R-HPODE further to 12(13)-epoxy-10-hydroxy-8(E)-octa-decenoic acid as the end product. Linoleic acid is oxidized mainly to the R stereoisomer of 10-HPODE. The dioxygenase domain is also able to oygenate position C-8 of linoleic acid to produce 8(R)-hydroperoxy-8(E),12(Z)-octadecadienoic acid (8R-HPODE). In Fusarium oxysporum (strain Fo5176) (Fusarium vascular wilt), this protein is Bifunctional dioxygenase (DOX)-epoxy alcohol synthase (EAS).